A 1087-amino-acid polypeptide reads, in one-letter code: Gelsolin-related protein of 125 kDa (1087 aa).

Residues 1 to 40 (MEEDNIVDSKEIENNVEDKKEETPSSSPSPSSSLQQQQEE) are disordered. Positions 7-23 (VDSKEIENNVEDKKEET) are enriched in basic and acidic residues. A compositionally biased stretch (low complexity) spans 24-40 (PSSSPSPSSSLQQQQEE). 4 Gelsolin-like repeats span residues 73-146 (PFHF…PTFL), 183-286 (FLFK…FSKW), 335-442 (GKLL…FGTE), and 465-538 (TQLF…DNFW). A coiled-coil region spans residues 550 to 598 (INTFINENKEEKEKEEEEKEEEEEEEEEEEEEEEEEKDNNKTTTIIKHL). A disordered region spans residues 555–592 (NENKEEKEKEEEEKEEEEEEEEEEEEEEEEEKDNNKTT). A compositionally biased stretch (acidic residues) spans 562–586 (EKEEEEKEEEEEEEEEEEEEEEEEK). Residues 614–692 (IFKADQINPF…EQYNESPLFK (79 aa)) form a Gelsolin-like 5 repeat. Residues 710 to 912 (IISYKQKLAE…ETVNEENEVG (203 aa)) are a coiled coil. Basic and acidic residues-rich tracts occupy residues 732 to 770 (KQQQEQEQEQQQKENNKIVEEVKEEVKEEDVKEEVKEEE), 779 to 808 (EEVKEVAKEETKEEIKEEVNDEATEVKEVN), 817 to 840 (EEVKEEVKVEVKEEEVKGEAKEEE), and 849 to 900 (EEVK…KVNE). The tract at residues 732–1087 (KQQQEQEQEQ…HNRSSSLTHA (356 aa)) is disordered. Positions 901–910 (ENETVNEENE) are enriched in acidic residues. 2 stretches are compositionally biased toward polar residues: residues 925–939 (ANSSSTISSPENEGS) and 950–961 (EPITPSVVSSSG). The span at 983-1002 (QGRKGGRKSHGKNQPQHKKN) shows a compositional bias: basic residues. Residues 1018 to 1040 (KSLNLDIDNQSFDLNSINNNNSV) are compositionally biased toward polar residues. Residues 1047–1065 (SSPLSFSSSSINSNSTHNT) show a composition bias toward low complexity. Basic residues predominate over residues 1066-1080 (PSKKNKNKNKKKHNR).

The protein belongs to the villin/gelsolin family. Interacts with rasD and abpC.

It localises to the cytoplasmic vesicle. Functionally, involved in phototaxis. Required for coupling photodetection to the locomotory machinery of slugs. May be essential in the natural environment for the propagation of spores. The polypeptide is Gelsolin-related protein of 125 kDa (gnrA) (Dictyostelium discoideum (Social amoeba)).